The following is a 75-amino-acid chain: RNA-binding protein KhpA (75 aa).

The KH domain maps to 29 to 75 (KKVYEIVVNEEDVGQVIGKDGRTIKSLKILLSALMGDSKEITIKVVR).

This sequence belongs to the KhpA RNA-binding protein family. As to quaternary structure, forms a complex with KhpB.

Its subcellular location is the cytoplasm. Its function is as follows. A probable RNA chaperone. Forms a complex with KhpB which binds to cellular RNA and controls its expression. Plays a role in peptidoglycan (PG) homeostasis and cell length regulation. This Thermotoga maritima (strain ATCC 43589 / DSM 3109 / JCM 10099 / NBRC 100826 / MSB8) protein is RNA-binding protein KhpA.